The following is a 150-amino-acid chain: Ribonuclease HI (150 aa).

Residues 1–141 form the RNase H type-1 domain; sequence MKSINAYTDG…VDVLARGQAM (141 aa). Positions 9, 47, 69, and 133 each coordinate Mg(2+).

The protein belongs to the RNase H family. Monomer. It depends on Mg(2+) as a cofactor.

Its subcellular location is the cytoplasm. It catalyses the reaction Endonucleolytic cleavage to 5'-phosphomonoester.. Endonuclease that specifically degrades the RNA of RNA-DNA hybrids. This is Ribonuclease HI from Xylella fastidiosa (strain 9a5c).